A 326-amino-acid polypeptide reads, in one-letter code: Deoxyuridine 5'-triphosphate nucleotidohydrolase (326 aa).

Residues 218 to 220 and 321 to 322 contribute to the substrate site; these read RSS and FG.

The protein belongs to the dUTPase family. It depends on Mg(2+) as a cofactor.

The enzyme catalyses dUTP + H2O = dUMP + diphosphate + H(+). Its function is as follows. Involved in nucleotide metabolism: produces dUMP, the immediate precursor of thymidine nucleotides and decreases the intracellular concentration of dUTP to avoid uracil incorporation into viral DNA. The protein is Deoxyuridine 5'-triphosphate nucleotidohydrolase of Equus caballus (Horse).